A 609-amino-acid polypeptide reads, in one-letter code: MANMIDKIDLKSQGSSNLSGEMTNHQKVGTLYKRLLLQVKHLWHFLLLAAIGSIFFSAADASMIYLINPILNYGFGPGGGITKQSATILMLMGVGMVGLLALRSVGSFVSQYFIGSLGQKVVYKFRKDIYKRLMGLPASFFDKHSTGQIISRLLYNVDQVTEATSTAIITVVQDGTFVIGLIVVMFVSSWQLSLFLIVVGPFLGLFISIINKKFRNLSRNTQSSMGNVTHTAEETIRNYKEIRIFGAQQKQQNKFFKNLDYTYSQQIRTIALDALTSPVIQIIASLVLAFSLFTIAIFGTNEGDGSSWLTAGSFASFFAAAAAILKPIKNLTKVNVVIQKAVAATEDIFYILDYPAEKETGSKELAKVDGNVTIKDLSFAFGEHKVLSGVSVDIKAGQTVAFVGKSGSGKTTLTSIISRFYTQHEGEILLDGVDTRELTLENLRSHLSIVSQNVHLFDDTVYNNIAFGLSREVSEEEVIDALKRANAYEFVQELSDGINTNIGNNGSKLSGGQRQRISIARALLKNAPVLIFDEATSALDNESERVVQQALESLTKSCTTIVIAHRLSTVENADKIVVMDGGMVVESGKHQELLEQGGLYTRLYQSGLQ.

Helical transmembrane passes span 47–67 (LLAA…IYLI), 88–108 (ILML…VGSF), 167–187 (AIIT…VMFV), 190–210 (WQLS…ISII), 279–299 (VIQI…AIFG), and 305–325 (GSSW…AAIL). Residues 47–340 (LLAAIGSIFF…LTKVNVVIQK (294 aa)) enclose the ABC transmembrane type-1 domain. An ABC transporter domain is found at 372 to 606 (VTIKDLSFAF…GGLYTRLYQS (235 aa)). 404-411 (GKSGSGKT) provides a ligand contact to ATP.

The protein belongs to the ABC transporter superfamily. Lipid exporter (TC 3.A.1.106) family. As to quaternary structure, homodimer.

Its subcellular location is the cell inner membrane. The enzyme catalyses ATP + H2O + lipid A-core oligosaccharideSide 1 = ADP + phosphate + lipid A-core oligosaccharideSide 2.. Functionally, involved in lipopolysaccharide (LPS) biosynthesis. Translocates lipid A-core from the inner to the outer leaflet of the inner membrane. Transmembrane domains (TMD) form a pore in the inner membrane and the ATP-binding domain (NBD) is responsible for energy generation. The polypeptide is ATP-dependent lipid A-core flippase (Francisella tularensis subsp. holarctica (strain LVS)).